The following is a 333-amino-acid chain: Lipoyl synthase (333 aa).

Cys56, Cys61, Cys67, Cys82, Cys86, Cys89, and Ser293 together coordinate [4Fe-4S] cluster. In terms of domain architecture, Radical SAM core spans 68-282; sequence WEDREATFLI…GRVGAELGFS (215 aa). Positions 301-333 are disordered; the sequence is QQAMTARDQDRSEMSVPPESVSENSHGQRPSPW. A compositionally biased stretch (low complexity) spans 314–325; the sequence is MSVPPESVSENS.

This sequence belongs to the radical SAM superfamily. Lipoyl synthase family. It depends on [4Fe-4S] cluster as a cofactor.

It is found in the cytoplasm. The catalysed reaction is [[Fe-S] cluster scaffold protein carrying a second [4Fe-4S](2+) cluster] + N(6)-octanoyl-L-lysyl-[protein] + 2 oxidized [2Fe-2S]-[ferredoxin] + 2 S-adenosyl-L-methionine + 4 H(+) = [[Fe-S] cluster scaffold protein] + N(6)-[(R)-dihydrolipoyl]-L-lysyl-[protein] + 4 Fe(3+) + 2 hydrogen sulfide + 2 5'-deoxyadenosine + 2 L-methionine + 2 reduced [2Fe-2S]-[ferredoxin]. It participates in protein modification; protein lipoylation via endogenous pathway; protein N(6)-(lipoyl)lysine from octanoyl-[acyl-carrier-protein]: step 2/2. Its function is as follows. Catalyzes the radical-mediated insertion of two sulfur atoms into the C-6 and C-8 positions of the octanoyl moiety bound to the lipoyl domains of lipoate-dependent enzymes, thereby converting the octanoylated domains into lipoylated derivatives. The sequence is that of Lipoyl synthase from Frankia casuarinae (strain DSM 45818 / CECT 9043 / HFP020203 / CcI3).